The sequence spans 682 residues: Cyclic nucleotide-gated cation channel (682 aa).

Residues 1–41 (MTGQAALERSVSSHRLSVRSRLEGEAERAESAISRTDGDDD) are disordered. Over 1-136 (MTGQAALERS…EGFVVSQSDD (136 aa)) the chain is Cytoplasmic. Over residues 20-30 (SRLEGEAERAE) the composition is skewed to basic and acidic residues. The chain crosses the membrane as a helical span at residues 137–157 (IYYYWLFFIALASLYNWIMLV). The Extracellular portion of the chain corresponds to 158–169 (ARACFDQLQDEN). The chain crosses the membrane as a helical span at residues 170–190 (FFLWVGLDYLCDVIYILDTCI). Residues 191 to 218 (RLRTGYLEQGLLVKDLAKLRDNYIRTLQ) lie on the Cytoplasmic side of the membrane. Residues 219-239 (FKLDFLSILPTELLFFVTGYV) form a helical membrane-spanning segment. Topologically, residues 240-272 (PQLRFNRLLRFSRMFEFFDRTETRTNYPNAFRI) are extracellular. A helical transmembrane segment spans residues 273–293 (CNLILYILVIIHWNACIYYAI). Topologically, residues 294-311 (SKALGLSSDTWVYSGQNK) are cytoplasmic. A helical transmembrane segment spans residues 312–332 (TLSFCYVYCFYWSTLTLTTIG). At 333–343 (EMPPPVKDEEY) the chain is on the extracellular side. The helical transmembrane segment at 344–364 (VFVVFDFLVGVLIFATIVGNV) threads the bilayer. Residues 365-682 (GSMIANMNAT…SAETNSEEET (318 aa)) are Cytoplasmic-facing. Residues 455 to 577 (LLVE…QGLL), E514, and R529 each bind 3',5'-cyclic AMP. Positions 649-682 (GEHAGVPTHTHADIHAQPETHTRTSAETNSEEET) are disordered. The span at 658–672 (THADIHAQPETHTRT) shows a compositional bias: basic and acidic residues.

The protein belongs to the cyclic nucleotide-gated cation channel (TC 1.A.1.5) family. In terms of tissue distribution, olfactory neurons.

The protein resides in the membrane. Functionally, this cyclic nucleotide-gated channel is activated equally well by both cAMP and cGMP. The protein is Cyclic nucleotide-gated cation channel of Ictalurus punctatus (Channel catfish).